A 194-amino-acid polypeptide reads, in one-letter code: Large ribosomal subunit protein bL25 (194 aa).

Belongs to the bacterial ribosomal protein bL25 family. CTC subfamily. Part of the 50S ribosomal subunit; part of the 5S rRNA/L5/L18/L25 subcomplex. Contacts the 5S rRNA. Binds to the 5S rRNA independently of L5 and L18.

Functionally, this is one of the proteins that binds to the 5S RNA in the ribosome where it forms part of the central protuberance. This Neorickettsia sennetsu (strain ATCC VR-367 / Miyayama) (Ehrlichia sennetsu) protein is Large ribosomal subunit protein bL25.